A 200-amino-acid chain; its full sequence is Pyridoxal 5'-phosphate synthase subunit PdxT (200 aa).

52 to 54 (GES) serves as a coordination point for L-glutamine. Cys84 (nucleophile) is an active-site residue. Residues Arg116 and 145–146 (IR) contribute to the L-glutamine site. Active-site charge relay system residues include His181 and Glu183.

It belongs to the glutaminase PdxT/SNO family. As to quaternary structure, in the presence of PdxS, forms a dodecamer of heterodimers. Only shows activity in the heterodimer.

The enzyme catalyses aldehydo-D-ribose 5-phosphate + D-glyceraldehyde 3-phosphate + L-glutamine = pyridoxal 5'-phosphate + L-glutamate + phosphate + 3 H2O + H(+). It catalyses the reaction L-glutamine + H2O = L-glutamate + NH4(+). It participates in cofactor biosynthesis; pyridoxal 5'-phosphate biosynthesis. In terms of biological role, catalyzes the hydrolysis of glutamine to glutamate and ammonia as part of the biosynthesis of pyridoxal 5'-phosphate. The resulting ammonia molecule is channeled to the active site of PdxS. The sequence is that of Pyridoxal 5'-phosphate synthase subunit PdxT from Saccharolobus islandicus (strain L.S.2.15 / Lassen #1) (Sulfolobus islandicus).